We begin with the raw amino-acid sequence, 352 residues long: Divinyl chlorophyll a/b light-harvesting protein PcbB (352 aa).

The next 6 helical transmembrane spans lie at Phe-27–Leu-47, Cys-89–Leu-109, Phe-142–Ala-162, Val-203–Ile-223, Ala-243–Ser-263, and Leu-307–Leu-327.

The protein belongs to the PsbB/PsbC family. IsiA/Pcb subfamily. In terms of assembly, the antenna complex consists of divinyl chlorophylls (a and b) and divinyl chlorophyll a/b binding proteins and binds more divinyl chlorophyll b than does the antenna complex from high-light-adapted Prochlorococcus. It depends on divinyl chlorophyll a as a cofactor. The cofactor is divinyl chlorophyll b.

It localises to the cellular thylakoid membrane. In terms of biological role, the antenna complex functions as a light receptor, it captures and delivers excitation energy to photosystems II and I. The Prochlorales pcb genes are not related to higher plant LHCs. This Prochlorococcus marinus (strain NATL2A) protein is Divinyl chlorophyll a/b light-harvesting protein PcbB (pcbB).